A 392-amino-acid polypeptide reads, in one-letter code: Flagellar P-ring protein (392 aa).

The first 38 residues, 1–38 (MKPFARRALLTAEPIRALLLAASLLAATLGLMPAEAFG), serve as a signal peptide directing secretion.

This sequence belongs to the FlgI family. As to quaternary structure, the basal body constitutes a major portion of the flagellar organelle and consists of four rings (L,P,S, and M) mounted on a central rod.

It localises to the periplasm. It is found in the bacterial flagellum basal body. Assembles around the rod to form the L-ring and probably protects the motor/basal body from shearing forces during rotation. The protein is Flagellar P-ring protein of Paramagnetospirillum magneticum (strain ATCC 700264 / AMB-1) (Magnetospirillum magneticum).